The primary structure comprises 167 residues: Centrin-3 (167 aa).

4 EF-hand domains span residues 25–60 (EQKQ…LGFD), 61–96 (VKKA…WILE), 98–133 (DPHE…LGEN), and 134–167 (MSDE…TGDI). Residues aspartate 38, aspartate 40, aspartate 42, and glutamate 49 each contribute to the Ca(2+) site. Position 135 is a phosphoserine (serine 135). Ca(2+) contacts are provided by aspartate 147, aspartate 149, aspartate 151, glutamate 153, and glutamate 158.

It belongs to the centrin family. Monomer. Component of the TREX-2 complex (transcription and export complex 2), composed of at least ENY2, GANP, PCID2, SEM1, and either centrin CETN2 or CETN3. Interacts with USP49.

It localises to the cytoplasm. It is found in the cytoskeleton. The protein resides in the microtubule organizing center. The protein localises to the centrosome. Its subcellular location is the nucleus. It localises to the nucleolus. It is found in the nucleus envelope. The protein resides in the nuclear pore complex. The protein localises to the centriole. Plays a fundamental role in microtubule-organizing center structure and function. In terms of biological role, as a component of the TREX-2 complex, involved in the export of mRNAs to the cytoplasm through the nuclear pores. In Mus musculus (Mouse), this protein is Centrin-3 (Cetn3).